The sequence spans 509 residues: GMP synthase [glutamine-hydrolyzing] (509 aa).

Residues 4-193 (KILILDFGSQ…VVHICGCSQD (190 aa)) enclose the Glutamine amidotransferase type-1 domain. The active-site Nucleophile is the cysteine 79. Residues histidine 167 and glutamate 169 contribute to the active site. The GMPS ATP-PPase domain occupies 194-384 (WTPDAFVETT…LGIDDIILKR (191 aa)). 221–227 (SGGVDSS) provides a ligand contact to ATP.

In terms of assembly, homodimer.

The enzyme catalyses XMP + L-glutamine + ATP + H2O = GMP + L-glutamate + AMP + diphosphate + 2 H(+). The protein operates within purine metabolism; GMP biosynthesis; GMP from XMP (L-Gln route): step 1/1. In terms of biological role, catalyzes the synthesis of GMP from XMP. This Cytophaga hutchinsonii (strain ATCC 33406 / DSM 1761 / CIP 103989 / NBRC 15051 / NCIMB 9469 / D465) protein is GMP synthase [glutamine-hydrolyzing].